Reading from the N-terminus, the 154-residue chain is Nucleoside diphosphate kinase A2 (154 aa).

6 residues coordinate ATP: Lys13, Phe61, Arg89, Thr95, Arg106, and Asn116. The active-site Pros-phosphohistidine intermediate is His119.

It belongs to the NDK family. It depends on Mg(2+) as a cofactor.

The protein localises to the cytoplasm. The catalysed reaction is a 2'-deoxyribonucleoside 5'-diphosphate + ATP = a 2'-deoxyribonucleoside 5'-triphosphate + ADP. The enzyme catalyses a ribonucleoside 5'-diphosphate + ATP = a ribonucleoside 5'-triphosphate + ADP. In terms of biological role, major role in the synthesis of nucleoside triphosphates other than ATP. The ATP gamma phosphate is transferred to the NDP beta phosphate via a ping-pong mechanism, using a phosphorylated active-site intermediate. In Xenopus laevis (African clawed frog), this protein is Nucleoside diphosphate kinase A2.